We begin with the raw amino-acid sequence, 565 residues long: Sialate:O-sulfotransferase 2 (565 aa).

The Cytoplasmic portion of the chain corresponds to 1–18 (MAKLWFKFQRYFRRKPVR). The chain crosses the membrane as a helical; Signal-anchor for type II membrane protein span at residues 19–41 (FFTFLALYLTAGSLVFLHSGFVG). Residues 42-565 (QPAVSGNQAN…TGVPDDYYPR (524 aa)) are Extracellular-facing. 2 WSC domains span residues 127-219 (RAKY…YRLQ) and 230-324 (SAVF…YQTQ). N-linked (GlcNAc...) asparagine glycosylation is found at asparagine 189 and asparagine 242.

Belongs to the WSCD family.

The protein resides in the golgi apparatus membrane. Functionally, sialate:O-sulfotransferase which catalyzes 8-O-sulfation at the Sia-glycan level using 3'-phosphoadenosine 5'-phosphosulfate (PAPS) as a donor, forming 8-O-sulfated Sia (Sia8S)-glycans. Displays selectivity toward glycoproteins such as TF/transferrin. The chain is Sialate:O-sulfotransferase 2 (WSCD2) from Homo sapiens (Human).